Reading from the N-terminus, the 639-residue chain is MRMTTGQALVKFLDNQYVSFDGKEEKFVDGIFTIFGHGIVVGLGEALYENPGELKVYQGRNEQGMAHVSTAFAKQNNRRKIIACSSSVGPGAANMVTAAATATVNNIPLLLLPGDSFATRQPDPVLQQIEQSYNLGITTNDAFKPVCKYWDRINRPEQLMSAMINAMRVLTDPAETGAVCIALPQDVQGEAYDFPEYFFKKRVHRITRPLAVQEEFEEALDIIMNKKKPIIICGGGVRYSEAGEALVDFAEEFNIPICETQAGKSAIKSSHPLNLGGIGVTGNLAANMIAKDTDLVIGVGTRFSDFTTSSKSLFKNPEVDFITVNVSKFHGGKMDAHKIIGDAKVCIEELQAMLEANNYESSYEDEIVNAKKAWKEEMKRLTNIKYDENFEALIKPKREGCIEEFSVLTGGLITQTAALGVIRETIDDDAIVVGAAGSLPGDLQRMWETDARDSYHMEYGYSCMGYEIAATLGAKLAEPEREVYSMVGDGSYLMLHSEMVTAMQEQKKINILLFDNCGFGCINNLQMSNGIGSLATEFRYRDENGKLEGGLIPIDFAKVASGYGLKTYSVKTLAQLKEALEDAKKQKVSTLIDIKVLPKTMTDGYDAWWHVGIAGESEIDGVNKAFENKEKNLKAARRY.

Glutamate 62 lines the thiamine diphosphate pocket. A thiamine pyrophosphate binding region spans residues 438-518 (SLPGDLQRMW…INILLFDNCG (81 aa)). Residues aspartate 489 and asparagine 516 each contribute to the Mg(2+) site.

This sequence belongs to the TPP enzyme family. The cofactor is Mg(2+). It depends on thiamine diphosphate as a cofactor.

It carries out the reaction 3D-3,5/4-trihydroxycyclohexane-1,2-dione + H2O = 5-deoxy-D-glucuronate + H(+). The protein operates within polyol metabolism; myo-inositol degradation into acetyl-CoA; acetyl-CoA from myo-inositol: step 3/7. Involved in the cleavage of the C1-C2 bond of 3D-(3,5/4)-trihydroxycyclohexane-1,2-dione (THcHDO) to yield 5-deoxy-glucuronate (5DG). The sequence is that of 3D-(3,5/4)-trihydroxycyclohexane-1,2-dione hydrolase from Clostridium perfringens (strain 13 / Type A).